Consider the following 113-residue polypeptide: Ribulose bisphosphate carboxylase small subunit (113 aa).

Belongs to the RuBisCO small chain family. In terms of assembly, heterohexadecamer of 8 large and 8 small subunits. Forms a CsoS2-CsoS1-RuBisCO complex.

Its subcellular location is the carboxysome. Functionally, ruBisCO catalyzes two reactions: the carboxylation of D-ribulose 1,5-bisphosphate, the primary event in carbon dioxide fixation, as well as the oxidative fragmentation of the pentose substrate in the photorespiration process. Both reactions occur simultaneously and in competition at the same active site. Although the small subunit is not catalytic it is essential for maximal activity. The sequence is that of Ribulose bisphosphate carboxylase small subunit from Prochlorococcus marinus (strain MIT 9313).